The primary structure comprises 132 residues: Cliotide T2 (132 aa).

The N-terminal stretch at 1-28 (MAYVRLTSLAVLFFLAASVMLNVKKTEG) is a signal peptide. The segment at residues 29-58 (GEFLKCGESCVQGECYTPGCSCDWPICKKN) is a cross-link (cyclopeptide (Gly-Asn)). Cystine bridges form between cysteine 34–cysteine 48, cysteine 38–cysteine 50, and cysteine 43–cysteine 55. Residues 59–132 (HIIATNAKTV…NLKMPMTIIN (74 aa)) constitute a propeptide, removed in mature form.

This is a cyclic peptide. As to expression, expressed in flower, stem, shoot and pod but not in root, leaf, seed and nodule (at protein level).

In terms of biological role, probably participates in a plant defense mechanism. Not active against Gram-negative bacteria E.coli ATCC 700926, K.pneumoniae ATTC 13883 and P.aeruginosa ATCC 39018 at concentration up to 100 uM. Has cytotoxic but no hemolytic activity. The chain is Cliotide T2 from Clitoria ternatea (Butterfly pea).